A 399-amino-acid polypeptide reads, in one-letter code: Presilphiperfolan-8-beta-ol synthase (399 aa).

The disordered stretch occupies residues 1-60 (MAIPALEPQLHDADTSSNNMSSNSTDSGYDTNSTTPLEKSEKPNTQELKQQQLDPKRPPF). Positions 15–27 (TSSNNMSSNSTDS) are enriched in low complexity. Polar residues predominate over residues 28-37 (GYDTNSTTPL). Residues D141, N285, and S289 each contribute to the Mg(2+) site. The short motif at 141–145 (DDQFD) is the DDXXD motif element. (2E,6E)-farnesyl diphosphate-binding residues include R373 and Y374.

It belongs to the terpene synthase family. Mg(2+) is required as a cofactor.

The enzyme catalyses (2E,6E)-farnesyl diphosphate + H2O = presilphiperfolan-8beta-ol + diphosphate. It functions in the pathway secondary metabolite biosynthesis. Its function is as follows. Presilphiperfolan-8-beta-ol synthase; part of the gene cluster that mediates the biosynthesis of botrydial. Botrydial is necessary for colonization of plant tissue by the T4 strain. It is a strain-dependent virulence factor since highly aggressive strains like SAS56 or B05 still retain substantial virulence when botrydial synthesis is impaired, since they produce also botcinic acid. The first step of botrydial biosynthesis is performed by the sesquiterpene synthase BOT2 which catalyzes the cyclization of farnesyl diphosphate (FPP) to presilphiperfolan-8-beta-ol (PSP). The cytochrome P450 monooxygenase BOT4 then catalyzes the hydroxylation at C-4 to give a probotryane intermediate. Acetylation of the hydroxyl at C-4 is carried out by the acetyltransferase BOT5, followed by the combined action of the P450 monooxygenases BOT3 and BOT1, to yield finally the glycol, via the regio- and stereospecific hydroxylations at C-10 and C-15 of the probotryane intermediates, respectively. The cleavage of the C10-C15 bond of probotryane skeleton is an intriguing and chemically important reaction, which could be mediated by some of the monooxygenases or by a combination of them. It is possible that either BOT3 or BOT1 would oxidize either the 10- or the 15-hydroxy group to the hydroperoxide derivative, which would then undergo heterolytic fragmentation to give the dialdehyde botrydial. Finally, the dehydrogenase BOT7 might be involved in the conversion of botrydial to dihydrobotrydial. This Botryotinia fuckeliana (Noble rot fungus) protein is Presilphiperfolan-8-beta-ol synthase (BOT2).